Reading from the N-terminus, the 203-residue chain is Outer-membrane lipoprotein LolB (203 aa).

Residues 1–17 (MNRLFRLLPLASLVLTA) form the signal peptide. Cys-18 carries the N-palmitoyl cysteine lipid modification. A lipid anchor (S-diacylglycerol cysteine) is attached at Cys-18.

The protein belongs to the LolB family. Monomer.

The protein resides in the cell outer membrane. Functionally, plays a critical role in the incorporation of lipoproteins in the outer membrane after they are released by the LolA protein. This is Outer-membrane lipoprotein LolB from Klebsiella pneumoniae (strain 342).